Reading from the N-terminus, the 812-residue chain is Ras guanine nucleotide exchange factor J (812 aa).

Composition is skewed to low complexity over residues 1–36 (MSNP…NSKS) and 53–65 (LLNR…NLNN). The interval 1–146 (MSNPVSINNS…GGSSGGLNMS (146 aa)) is disordered. Over residues 75 to 86 (SFTSNYQNIYTP) the composition is skewed to polar residues. Residues 87–101 (NNNSYNSSNNNNNNN) show a composition bias toward low complexity. The segment covering 131–141 (NSGGGGGGSSG) has biased composition (gly residues). One can recognise a LisH domain in the interval 214–246 (GRDTMLQLILQHLQFEGLMDSRKLLEEEARVQY). A disordered region spans residues 320 to 382 (IIYVDDKEKE…NNSIGNSNSY (63 aa)). A compositionally biased stretch (basic and acidic residues) spans 323–343 (VDDKEKEKEKEKEKEKEKDKF). Residues 344–382 (GPNSTNSLSGSGSSPNIPSGMNNNSSSIGNNSIGNSNSY) show a composition bias toward low complexity. One can recognise an N-terminal Ras-GEF domain in the interval 409–535 (NKPQVKAASL…LSESLNAKIK (127 aa)). A Ras-GEF domain is found at 573-804 (DEEEIARQLT…YSRSMSFEPR (232 aa)).

In terms of biological role, promotes the exchange of Ras-bound GDP by GTP. The protein is Ras guanine nucleotide exchange factor J (gefJ) of Dictyostelium discoideum (Social amoeba).